We begin with the raw amino-acid sequence, 310 residues long: Terpene synthase 6 (310 aa).

The DDxx(x)D/E motif motif lies at 93 to 98 (DDFYFE). The NDxxSxxxD/E motif motif lies at 222–230 (NDCYSFNKE).

Belongs to the terpene synthase family.

It carries out the reaction (2E,6E)-farnesyl diphosphate = (E)-beta-farnesene + diphosphate. The catalysed reaction is (2E,6E)-farnesyl diphosphate = (1S,2S,4R)-beta-elemene + diphosphate. It catalyses the reaction (2E,6E)-farnesyl diphosphate = (3E,6E)-alpha-farnesene + diphosphate. In terms of biological role, terpene synthase that converts its substrate farnesyl diphosphate (FPP) into the sesquiterpenes beta-elemene, (E)-beta-farnesene and (E,E)-alpha-farnesene. This Dictyostelium purpureum (Slime mold) protein is Terpene synthase 6.